A 234-amino-acid polypeptide reads, in one-letter code: Large ribosomal subunit protein uL1 (234 aa).

It belongs to the universal ribosomal protein uL1 family. In terms of assembly, part of the 50S ribosomal subunit.

Binds directly to 23S rRNA. The L1 stalk is quite mobile in the ribosome, and is involved in E site tRNA release. Functionally, protein L1 is also a translational repressor protein, it controls the translation of the L11 operon by binding to its mRNA. The sequence is that of Large ribosomal subunit protein uL1 from Sulfurovum sp. (strain NBC37-1).